The following is a 121-amino-acid chain: uncharacterized protein (121 aa).

This sequence to M.jannaschii MJ0989.

This is an uncharacterized protein from Methanopyrus kandleri (strain AV19 / DSM 6324 / JCM 9639 / NBRC 100938).